A 522-amino-acid polypeptide reads, in one-letter code: MSEILEDAIKSKAWPFEEAKKILDSLNGKTPEKGYVLFETGYGPSGLPHIGTFGENARMVMVQKAFEQLSNIKTKLICFSDDMDGLRKVPSNIPNPEMVAGYMDMPLTSIPDPFGECESYGHYMNAKLRSFLDKFGFEYEFYSSTEMYKAGMFDEMLIRVLEKYDEIMELMLPTFREERKATYSPFMPICPKTGKVLQVPIHKWDAKLGTITYKDENGETIEVPVTKGHCKLQWKPDFGMRWAALKVDYEMYGKDHLANGRLYSEICRILGEKPPVQLCYELFLDENGEKISKSKGNSISVDDWLKYAPVESMALFMYQNPTRAKRLFFDVIPKNVDEYITFNQKYHLEEDRTKRFANPVYHIHHGNVPKIETFGITYSLLLNLTSVCNPSDKSVLWGFISRYEPKAMPNNSPYLDHLAEFAIRYYNDFVKAHKSYLAPSEKHKAILQDILDMLKGLPEQIEAESIQKGIYDIGMKAGYENLRDYFKDLYQILLGQSDGPRLGTFIKLYGISETMKLIEEKL.

Residues 44 to 52 (PSGLPHIGT) carry the 'HIGH' region motif. A 'KMSKS' region motif is present at residues 290–294 (KISKS). ATP is bound at residue Lys-293.

Belongs to the class-I aminoacyl-tRNA synthetase family.

Its subcellular location is the cytoplasm. The catalysed reaction is tRNA(Lys) + L-lysine + ATP = L-lysyl-tRNA(Lys) + AMP + diphosphate. This chain is Lysine--tRNA ligase, found in Rickettsia bellii (strain RML369-C).